The chain runs to 126 residues: Probable DNA-directed RNA polymerase II subunit RPB11 (126 aa).

Belongs to the archaeal Rpo11/eukaryotic RPB11/RPC19 RNA polymerase subunit family. In terms of assembly, component of the RNA polymerase II (Pol II) complex consisting of 12 subunits.

The protein resides in the nucleus. DNA-dependent RNA polymerase catalyzes the transcription of DNA into RNA using the four ribonucleoside triphosphates as substrates. Component of RNA polymerase II which synthesizes mRNA precursors and many functional non-coding RNAs. Pol II is the central component of the basal RNA polymerase II transcription machinery. It is composed of mobile elements that move relative to each other. RPB11 is part of the core element with the central large cleft. This Plasmodium chabaudi chabaudi protein is Probable DNA-directed RNA polymerase II subunit RPB11.